The sequence spans 388 residues: Succinate--CoA ligase [ADP-forming] subunit beta (388 aa).

The ATP-grasp domain occupies 9–244 (KQLFAQYGLP…PAQNDAREAH (236 aa)). ATP contacts are provided by residues Lys-46, 53-55 (GRG), Glu-99, Thr-102, and Glu-107. Residues Asn-199 and Asp-213 each coordinate Mg(2+). Substrate contacts are provided by residues Asn-264 and 321 to 323 (GIV).

Belongs to the succinate/malate CoA ligase beta subunit family. In terms of assembly, heterotetramer of two alpha and two beta subunits. The cofactor is Mg(2+).

It catalyses the reaction succinate + ATP + CoA = succinyl-CoA + ADP + phosphate. The catalysed reaction is GTP + succinate + CoA = succinyl-CoA + GDP + phosphate. Its pathway is carbohydrate metabolism; tricarboxylic acid cycle; succinate from succinyl-CoA (ligase route): step 1/1. Functionally, succinyl-CoA synthetase functions in the citric acid cycle (TCA), coupling the hydrolysis of succinyl-CoA to the synthesis of either ATP or GTP and thus represents the only step of substrate-level phosphorylation in the TCA. The beta subunit provides nucleotide specificity of the enzyme and binds the substrate succinate, while the binding sites for coenzyme A and phosphate are found in the alpha subunit. This is Succinate--CoA ligase [ADP-forming] subunit beta from Edwardsiella ictaluri (strain 93-146).